A 50-amino-acid chain; its full sequence is Insulin-1 (50 aa).

Cystine bridges form between cysteine 7–cysteine 36, cysteine 19–cysteine 49, and cysteine 35–cysteine 40.

It belongs to the insulin family. As to quaternary structure, heterodimer of a B chain and an A chain linked by two disulfide bonds.

The protein resides in the secreted. Functionally, insulin decreases blood glucose concentration. It increases cell permeability to monosaccharides, amino acids and fatty acids. It accelerates glycolysis, the pentose phosphate cycle, and glycogen synthesis in liver. The chain is Insulin-1 from Thunnus orientalis (North Pacific bluefin tuna).